A 338-amino-acid chain; its full sequence is Ferrochelatase (338 aa).

Fe cation-binding residues include His189 and Glu294.

The protein belongs to the ferrochelatase family.

The protein resides in the cytoplasm. It carries out the reaction heme b + 2 H(+) = protoporphyrin IX + Fe(2+). The protein operates within porphyrin-containing compound metabolism; protoheme biosynthesis; protoheme from protoporphyrin-IX: step 1/1. Functionally, catalyzes the ferrous insertion into protoporphyrin IX. This is Ferrochelatase from Pseudomonas putida (strain ATCC 47054 / DSM 6125 / CFBP 8728 / NCIMB 11950 / KT2440).